We begin with the raw amino-acid sequence, 740 residues long: MKIAELNLPQALKDFYTGSGIPELYPPQAEAIRQGLLDGKNLLAAIPTASGKTLLAEMAMLKSIAEGGKAIYIVPLKALASEKYDRFLEFSKLPIKPDGVKVGIATGDFDSRDEYLGEKDIIVATSEKTDSLLRNGASWLSGLSVVVADEVHLIDSPNRGPTLEVTLAKLRKINVNLQILALSATIGNAKALAKWMDAALVQSEWRPTTLKEGVFYGRAITFKKEKRTVNNAGPDEVNSLVADTLEEGGQCLVFANTRKSSESIAQKVARSLSKKLQPAEKEQLAKLKQDVLRHAETDTCEKLAECVGNGVAFHHAGLKGEHRRIVEDGFRQNILKVIACTPTLAAGLNLPARRVIIRDYKRFDVNYGSVPIPVLEYKQMAGRAGRPRLDPYGEAVLIAKNYDEFGELMENYINADPEHITSKLGTEPAMRAHALSAVATDFCRSRQDLKAFMDTTFFAYQRGDLSHVIDNVLNFLLEENMIIESKGGSLKATDLGSLVSKLYIDPLSAALIAEGLEKAKKRPDVAEFGLLHLICSTPDVKSLYLRRGDYSWIIRYADEHASDFLSDVPDSYGDDVEFEQFLAGVKTAALAEMWINEKSEEAITTFFNIGPGDIRNLMETCTWLMHGTAEISALLGAPATRTARELAIRIENGASRELLDLITLKGVGRVRARKLYDAGYTSRDKLKAAEIPAIAAIPGIGDKLAVSIMSQLGRKVDHTPPETEEQPQVSGQSTLFSFDG.

Residues Gln-28 and 46–53 each bind ATP; that span reads IPTASGKT. The 172-residue stretch at 33-204 folds into the Helicase ATP-binding domain; it reads RQGLLDGKNL…WMDAALVQSE (172 aa). The DEAH box motif lies at 149-152; the sequence is DEVH. Positions 236–436 constitute a Helicase C-terminal domain; the sequence is EVNSLVADTL…EPAMRAHALS (201 aa). Residues 716-740 form a disordered region; the sequence is VDHTPPETEEQPQVSGQSTLFSFDG. Residues 726-740 are compositionally biased toward polar residues; that stretch reads QPQVSGQSTLFSFDG.

This sequence belongs to the helicase family. Hel308 subfamily. As to quaternary structure, monomer.

It carries out the reaction Couples ATP hydrolysis with the unwinding of duplex DNA by translocating in the 3'-5' direction.. The enzyme catalyses ATP + H2O = ADP + phosphate + H(+). DNA-dependent ATPase and 3'-5' DNA helicase that may be involved in repair of stalled replication forks. This is ATP-dependent DNA helicase Hel308 from Methanocella arvoryzae (strain DSM 22066 / NBRC 105507 / MRE50).